We begin with the raw amino-acid sequence, 222 residues long: UPF0502 protein PBPRB0676 (222 aa).

The protein belongs to the UPF0502 family.

The polypeptide is UPF0502 protein PBPRB0676 (Photobacterium profundum (strain SS9)).